The chain runs to 764 residues: E3 ubiquitin-protein ligase CBL-B-B (764 aa).

Low complexity predominate over residues 1-19 (MASSSSSSSNSSTSSSALS). The tract at residues 1-27 (MASSSSSSSNSSTSSSALSGRLPGARS) is disordered. The tract at residues 48-180 (PPKQAAADRR…KAIFPSGQFQ (133 aa)) is 4H. The Cbl-PTB domain maps to 48–356 (PPKQAAADRR…GRSYNPDLTD (309 aa)). An EF-hand-like region spans residues 181-253 (GDTFRITKAD…FEFDIFARLF (73 aa)). Ca(2+) is bound by residues D234, T236, N238, Y240, and E245. Residues 254–356 (QPWSSILRNW…GRSYNPDLTD (103 aa)) are SH2-like. Residue R299 participates in 4-O-phospho-L-tyrosine binding. Residues 357–385 (LCEPTPHDHIKVTQEQYELYCEMGSTFQL) are linker. An RING-type zinc finger spans residues 386–425 (CKICAENDKDVKIEPCGHLMCTSCLTSWQESDGQGCPFCR). Disordered stretches follow at residues 482–583 (MNER…SRTC) and 707–726 (KVRN…SSHP). Residues 485–498 (RQNSPVTSPGSSPL) are compositionally biased toward polar residues. The span at 556–578 (LPAPPPPLREPPPPPERPPPIPP) shows a compositional bias: pro residues.

As to quaternary structure, interacts with several SH3 domain-containing proteins and with poly-ubiquitinated proteins.

The protein localises to the cytoplasm. The catalysed reaction is S-ubiquitinyl-[E2 ubiquitin-conjugating enzyme]-L-cysteine + [acceptor protein]-L-lysine = [E2 ubiquitin-conjugating enzyme]-L-cysteine + N(6)-ubiquitinyl-[acceptor protein]-L-lysine.. The protein operates within protein modification; protein ubiquitination. E3 ubiquitin-protein ligase which accepts ubiquitin from specific E2 ubiquitin-conjugating enzymes, and transfers it to substrates, generally promoting their degradation by the proteasome. The protein is E3 ubiquitin-protein ligase CBL-B-B (cblb-b) of Xenopus laevis (African clawed frog).